The sequence spans 295 residues: 33 kDa chaperonin (295 aa).

2 disulfide bridges follow: Cys-238–Cys-240 and Cys-271–Cys-274.

Belongs to the HSP33 family. In terms of processing, under oxidizing conditions two disulfide bonds are formed involving the reactive cysteines. Under reducing conditions zinc is bound to the reactive cysteines and the protein is inactive.

The protein localises to the cytoplasm. Redox regulated molecular chaperone. Protects both thermally unfolding and oxidatively damaged proteins from irreversible aggregation. Plays an important role in the bacterial defense system toward oxidative stress. The sequence is that of 33 kDa chaperonin from Clostridium botulinum (strain Alaska E43 / Type E3).